Here is a 181-residue protein sequence, read N- to C-terminus: Probable nicotinate-nucleotide adenylyltransferase (181 aa).

It belongs to the NadD family.

It carries out the reaction nicotinate beta-D-ribonucleotide + ATP + H(+) = deamido-NAD(+) + diphosphate. It functions in the pathway cofactor biosynthesis; NAD(+) biosynthesis; deamido-NAD(+) from nicotinate D-ribonucleotide: step 1/1. Functionally, catalyzes the reversible adenylation of nicotinate mononucleotide (NaMN) to nicotinic acid adenine dinucleotide (NaAD). This is Probable nicotinate-nucleotide adenylyltransferase from Campylobacter jejuni subsp. jejuni serotype O:6 (strain 81116 / NCTC 11828).